A 466-amino-acid polypeptide reads, in one-letter code: Cytochrome P450 85A1 (466 aa).

The chain crosses the membrane as a helical span at residues 1–21; that stretch reads MVLAVLIGVLVGIVLVSSLLL. A heme-binding site is contributed by C416.

It belongs to the cytochrome P450 family. Heme is required as a cofactor.

It is found in the membrane. The catalysed reaction is 6-deoxoteasterone + reduced [NADPH--hemoprotein reductase] + O2 = 6alpha-hydroxyteasterone + oxidized [NADPH--hemoprotein reductase] + H2O + H(+). It carries out the reaction 6alpha-hydroxytyphasterol + reduced [NADPH--hemoprotein reductase] + O2 = teasterone + oxidized [NADPH--hemoprotein reductase] + 2 H2O + H(+). The enzyme catalyses 3-dehydro-6-deoxoteasterone + reduced [NADPH--hemoprotein reductase] + O2 = 3-dehydro-6alpha-hydroxyteasterone + oxidized [NADPH--hemoprotein reductase] + H2O + H(+). It catalyses the reaction 3-dehydro-6alpha-hydroxyteasterone + reduced [NADPH--hemoprotein reductase] + O2 = 3-dehydroteasterone + oxidized [NADPH--hemoprotein reductase] + 2 H2O + H(+). The catalysed reaction is 6-deoxotyphasterol + reduced [NADPH--hemoprotein reductase] + O2 = 6alpha-hydroxytyphasterol + oxidized [NADPH--hemoprotein reductase] + H2O + H(+). It carries out the reaction 6alpha-hydroxytyphasterol + reduced [NADPH--hemoprotein reductase] + O2 = typhasterol + oxidized [NADPH--hemoprotein reductase] + 2 H2O + H(+). The enzyme catalyses 6-deoxocastasterone + reduced [NADPH--hemoprotein reductase] + O2 = 6alpha-hydroxycastasterone + oxidized [NADPH--hemoprotein reductase] + H2O + H(+). It catalyses the reaction 6alpha-hydroxycastasterone + reduced [NADPH--hemoprotein reductase] + O2 = castasterone + oxidized [NADPH--hemoprotein reductase] + 2 H2O + H(+). The catalysed reaction is 3-dehydro-6-deoxoteasterone + 2 reduced [NADPH--hemoprotein reductase] + 2 O2 = 3-dehydroteasterone + 2 oxidized [NADPH--hemoprotein reductase] + 3 H2O + 2 H(+). It carries out the reaction 6-deoxocastasterone + 2 reduced [NADPH--hemoprotein reductase] + 2 O2 = castasterone + 2 oxidized [NADPH--hemoprotein reductase] + 3 H2O + 2 H(+). The enzyme catalyses 6-deoxoteasterone + 2 reduced [NADPH--hemoprotein reductase] + 2 O2 = teasterone + 2 oxidized [NADPH--hemoprotein reductase] + 3 H2O + 2 H(+). It catalyses the reaction 6-deoxotyphasterol + 2 reduced [NADPH--hemoprotein reductase] + 2 O2 = typhasterol + 2 oxidized [NADPH--hemoprotein reductase] + 3 H2O + 2 H(+). The protein operates within plant hormone biosynthesis; brassinosteroid biosynthesis. In terms of biological role, involved in reduction steps of the biosynthesis of plant campesterol-derivative steroids, ending to castasterone (CS) but missing brassinolide (BL). Catalyzes the C6-oxidation step in brassinosteroids biosynthesis; the conversion of 6-deoxoteasterone (6-deoxoTE) to teasterone (TE), 3-dehydro-6-deoxoteasterone (6-deoxo3DT, 6-deoxo-3-DHT) to 3-dehydroteasterone (3DT, 3-DHT), 6-deoxotyphasterol (6-deoxoTY) to typhasterol (TY) and of 6-deoxocastasterone (6-deoxoCS) to castasterone (CS). The chain is Cytochrome P450 85A1 from Brachypodium distachyon (Purple false brome).